A 470-amino-acid polypeptide reads, in one-letter code: Proton-coupled amino acid transporter 3 (470 aa).

The Cytoplasmic segment spans residues 1–46 (MSLLGRDYNSELNSLDNGPQSPSESSSSITSENVHPAGEAGLSMMQ). Positions 10-20 (SELNSLDNGPQ) are enriched in polar residues. The interval 10 to 33 (SELNSLDNGPQSPSESSSSITSEN) is disordered. Low complexity predominate over residues 21 to 31 (SPSESSSSITS). The helical transmembrane segment at 47 to 67 (TLIHLLKCNIGTGLLGLPLAI) threads the bilayer. The Extracellular segment spans residues 68–71 (KNAG). The helical transmembrane segment at 72-92 (LLVGPVSLLAIGVLTVHCMVI) threads the bilayer. The Cytoplasmic portion of the chain corresponds to 93–137 (LLNCAQHLSQRLQKTFVNYGEATMYGLETCPNTWLRAHAVWGRYT). A helical membrane pass occupies residues 138-158 (VSFLLVITQLGFCSVYFMFMA). The Extracellular portion of the chain corresponds to 159–185 (DNLQQMVEKAHVTSNICQPREILTLTP). Residues 186-206 (ILDIRFYMLIILPFLILLVFI) traverse the membrane as a helical segment. Topologically, residues 207–210 (QNLK) are cytoplasmic. The chain crosses the membrane as a helical span at residues 211–231 (VLSVFSTLANITTLGSMALIF). Residues 232 to 252 (EYIMEGIPYPSNLPLMANWKT) are Extracellular-facing. A helical membrane pass occupies residues 253–273 (FLLFFGTAIFTFEGVGMVLPL). Residues 274–284 (KNQMKHPQQFS) are Cytoplasmic-facing. A helical transmembrane segment spans residues 285 to 305 (FVLYLGMSIVIILYILLGTLG). Topologically, residues 306 to 337 (YMKFGSDTQASITLNLPNCWLYQSVKLMYSIG) are extracellular. Residues 338-358 (IFFTYALQFHVPAEIIIPFAI) form a helical membrane-spanning segment. Residues 359 to 367 (SQVSESWAL) lie on the Cytoplasmic side of the membrane. Residues 368-388 (FVDLSVRSALVCLTCVSAILI) traverse the membrane as a helical segment. The Extracellular portion of the chain corresponds to 389–392 (PRLD). Residues 393-413 (LVISLVGSVSSSALALIIPAL) form a helical membrane-spanning segment. Residues 414 to 425 (LEIVIFYSEDMS) are Cytoplasmic-facing. The chain crosses the membrane as a helical span at residues 426–446 (CVTIAKDIMISIVGLLGCIFG). The Extracellular portion of the chain corresponds to 447 to 470 (TYQALYELPQPISHSMANSTGVHA).

This sequence belongs to the amino acid/polyamine transporter 2 family. In terms of tissue distribution, specifically expressed in testis.

It is found in the membrane. The sequence is that of Proton-coupled amino acid transporter 3 (SLC36A3) from Homo sapiens (Human).